The primary structure comprises 59 residues: Large ribosomal subunit protein bL32 (59 aa).

The disordered stretch occupies residues 1–21 (MAVPKKKSSKSKGRSRAAHHA).

The protein belongs to the bacterial ribosomal protein bL32 family.

The polypeptide is Large ribosomal subunit protein bL32 (Magnetococcus marinus (strain ATCC BAA-1437 / JCM 17883 / MC-1)).